A 99-amino-acid chain; its full sequence is Large ribosomal subunit protein uL23 (99 aa).

The protein belongs to the universal ribosomal protein uL23 family. In terms of assembly, part of the 50S ribosomal subunit. Contacts protein L29, and trigger factor when it is bound to the ribosome.

Functionally, one of the early assembly proteins it binds 23S rRNA. One of the proteins that surrounds the polypeptide exit tunnel on the outside of the ribosome. Forms the main docking site for trigger factor binding to the ribosome. The protein is Large ribosomal subunit protein uL23 of Haemophilus influenzae (strain 86-028NP).